Consider the following 355-residue polypeptide: Glucokinase (355 aa).

Residue 11–16 (GDIGGT) coordinates ATP.

Belongs to the bacterial glucokinase family.

Its subcellular location is the cytoplasm. The enzyme catalyses D-glucose + ATP = D-glucose 6-phosphate + ADP + H(+). In Synechocystis sp. (strain ATCC 27184 / PCC 6803 / Kazusa), this protein is Glucokinase.